The primary structure comprises 267 residues: MKPTILLYDSGMGGLTIYDAIRQTLPNAHYLYCFDNAYFPYSERSENVLIEQAVKIVQKIAEKYPLDMVVVACNTASTVVLPALREKFAFPIVGTVPAIKPAAAISQTKTIGLLATKGTVERPYVAELIEKYAKDCIVEKIGTTTLVELVEEKIRTGNVDQDRLSKVVAEWQTHPTLDTVILGCTHFPLVKQELQQLLPKVKFFIDPGNGIANRVATLLSEFSLENSAQNKENIAFCTKMDEEFSKREIIMQQWGFKRLELLNLSQK.

Residues 9-10 and 41-42 each bind substrate; these read DS and YS. Catalysis depends on cysteine 73, which acts as the Proton donor/acceptor. A substrate-binding site is contributed by 74-75; it reads NT. Catalysis depends on cysteine 184, which acts as the Proton donor/acceptor. Position 185–186 (185–186) interacts with substrate; that stretch reads TH.

Belongs to the aspartate/glutamate racemases family.

It carries out the reaction L-glutamate = D-glutamate. It participates in cell wall biogenesis; peptidoglycan biosynthesis. In terms of biological role, provides the (R)-glutamate required for cell wall biosynthesis. This is Glutamate racemase from Actinobacillus pleuropneumoniae serotype 7 (strain AP76).